Consider the following 562-residue polypeptide: Arf-GAP domain and FG repeat-containing protein 1 (562 aa).

In terms of domain architecture, Arf-GAP spans 11 to 135; the sequence is EKHLKMLRDM…WYVPPEQAKV (125 aa). The segment at 29-52 adopts a C4-type zinc-finger fold; sequence CFDCDQRGPTYVNMTVGSFVCTSC. The residue at position 167 (Ser-167) is a Phosphoserine. The interval 168–194 is disordered; it reads APALHLNKGTPSQSPVVGRSQAQQQEK. Residues 176–191 show a composition bias toward polar residues; it reads GTPSQSPVVGRSQAQQ. Phosphothreonine is present on Thr-177. A phosphoserine mark is found at Ser-181 and Ser-362. An O-linked (GlcNAc) serine glycan is attached at Ser-367.

As to quaternary structure, interacts with EPS15R and EPS15. Interacts with FCHO1. In terms of processing, O-glycosylated.

It localises to the nucleus. It is found in the cytoplasmic vesicle. Its function is as follows. Required for vesicle docking or fusion during acrosome biogenesis. May play a role in RNA trafficking or localization. In Bos taurus (Bovine), this protein is Arf-GAP domain and FG repeat-containing protein 1 (AGFG1).